Consider the following 157-residue polypeptide: Transmembrane protein 50A (157 aa).

The residue at position 2 (serine 2) is an N-acetylserine. Residue serine 2 is modified to Phosphoserine. 4 helical membrane passes run 26–46 (IAAGVLFFTGWWIIIDAAVMY), 58–78 (TCGVIATIAFLMINAVSNGQV), 95–115 (IWLFIGFMLAFGSLIASMWIL), and 126–146 (VVYPGIAVFFQNAFIFFGGLV).

The protein belongs to the UPF0220 family.

The protein localises to the membrane. In Mus musculus (Mouse), this protein is Transmembrane protein 50A (Tmem50a).